Consider the following 274-residue polypeptide: Diaminopimelate epimerase (274 aa).

Positions 11, 44, and 64 each coordinate substrate. The active-site Proton donor is cysteine 73. Substrate contacts are provided by residues 74–75 (GN), asparagine 157, asparagine 190, and 208–209 (ER). Catalysis depends on cysteine 217, which acts as the Proton acceptor. 218–219 (GS) is a binding site for substrate.

The protein belongs to the diaminopimelate epimerase family. In terms of assembly, homodimer.

It is found in the cytoplasm. It carries out the reaction (2S,6S)-2,6-diaminopimelate = meso-2,6-diaminopimelate. It participates in amino-acid biosynthesis; L-lysine biosynthesis via DAP pathway; DL-2,6-diaminopimelate from LL-2,6-diaminopimelate: step 1/1. Functionally, catalyzes the stereoinversion of LL-2,6-diaminopimelate (L,L-DAP) to meso-diaminopimelate (meso-DAP), a precursor of L-lysine and an essential component of the bacterial peptidoglycan. The protein is Diaminopimelate epimerase of Escherichia coli O81 (strain ED1a).